A 492-amino-acid chain; its full sequence is Lipopolysaccharide biosynthesis protein WzxC (492 aa).

Residues 1–12 (MSLREKTISGAK) lie on the Cytoplasmic side of the membrane. Residues 13-33 (WSAIATVIIIGLGLVQMTVLA) traverse the membrane as a helical segment. At 34-42 (RIIDNHQFG) the chain is on the periplasmic side. A helical transmembrane segment spans residues 43–63 (LLTVSLVIIALADTLSDFGIA). Topologically, residues 64–81 (NSIIQRKEISHLELTTLY) are cytoplasmic. A helical transmembrane segment spans residues 82–102 (WLNVGLGIVVCVAVFLLSDLI). Topologically, residues 103–104 (GD) are periplasmic. The helical transmembrane segment at 105-125 (VLNNPDLAPLIKTLSLAFVVI) threads the bilayer. Residues 126-157 (PHGQQFRALMQKELEFNKIGMIETSAVLAGFT) are Cytoplasmic-facing. Residues 158–178 (CTVVSAHFWPLAMTAILGYLV) traverse the membrane as a helical segment. At 179 to 236 (NSAVRTLLFGYFGRKIYRPGLHFSLASVAPNLRFGAWLTADSIINYLNTNLSTLVLAR) the chain is on the periplasmic side. A helical transmembrane segment spans residues 237–257 (ILGAGVAGGYNLAYNVAVVPP). At 258 to 288 (MKLNPIITRVLFPAFAKIQDDTEKLRVNFYK) the chain is on the cytoplasmic side. A helical membrane pass occupies residues 289–309 (LLSVVGIINFPALLGLMVVSN). At 310 to 322 (NFVPLVFGEKWNS) the chain is on the periplasmic side. Residues 323–343 (IIPVLQLLCVVGLLRSVGNPI) form a helical membrane-spanning segment. The Cytoplasmic segment spans residues 344 to 364 (GSLLMAKARVDISFKFNVFKT). Residues 365-385 (FLFIPAIVIGGQMAGAIGVTL) form a helical membrane-spanning segment. Gly-386 is a topological domain (periplasmic). The helical transmembrane segment at 387 to 407 (FLLVQIINTILSYFVMIKPVL) threads the bilayer. Residues 408–417 (GSSYRQYILS) are Cytoplasmic-facing. A helical transmembrane segment spans residues 418 to 438 (LWLPFYLSLPTLVVSYALGIV). The Periplasmic portion of the chain corresponds to 439-445 (LKGQLAL). A helical transmembrane segment spans residues 446-466 (GMLLAVQIATGVLAFVVMIVL). At 467–492 (SRHPLVVEVKRQFCRSEKMKMLLRAG) the chain is on the cytoplasmic side.

This sequence belongs to the polysaccharide synthase family.

It localises to the cell inner membrane. It functions in the pathway bacterial outer membrane biogenesis; lipopolysaccharide biosynthesis. This is Lipopolysaccharide biosynthesis protein WzxC (wzxC) from Escherichia coli (strain K12).